Consider the following 1161-residue polypeptide: Nardilysin (1161 aa).

A signal peptide spans 1 to 18; that stretch reads MLRRVAVAAVCVTGRKLR. Disordered stretches follow at residues 49–103 and 130–218; these read MPGR…IIKS and VEGK…KKTT. Residues serine 85, serine 91, and serine 93 each carry the phosphoserine modification. Over residues 138–209 the composition is skewed to acidic residues; the sequence is TDEEEEEEEE…EENELEELEE (72 aa). Position 244 (histidine 244) interacts with Zn(2+). The active-site Proton acceptor is glutamate 247. Histidine 248 and glutamate 325 together coordinate Zn(2+).

The protein belongs to the peptidase M16 family. Interacts with BACE1 and NRG1. Zn(2+) serves as cofactor. In terms of tissue distribution, highly expressed in brain of early postnatal mice but expressed at a lower level in the brains of adult mice. Expression is high in cortical neurons, and lower in neurons in the striatum. Very low expression detected in the corpus callosum. Also expressed in the gray matter in spinal cord and dorsal root ganglia.

The protein resides in the mitochondrion. Its subcellular location is the cell projection. It localises to the dendrite. The catalysed reaction is Hydrolysis of polypeptides, preferably at -Xaa-|-Arg-Lys-, and less commonly at -Arg-|-Arg-Xaa-, in which Xaa is not Arg or Lys.. Functionally, cleaves peptide substrates on the N-terminus of arginine residues in dibasic pairs. Is a critical activator of BACE1- and ADAM17-mediated pro-neuregulin ectodomain shedding, involved in the positive regulation of axonal maturation and myelination. Required for proper functioning of 2-oxoglutarate dehydrogenase (OGDH). In Mus musculus (Mouse), this protein is Nardilysin.